A 120-amino-acid polypeptide reads, in one-letter code: NAD(P)H-quinone oxidoreductase subunit 3, chloroplastic (120 aa).

3 helical membrane passes run 10 to 30, 64 to 84, and 88 to 108; these read FWVFLIISSLIPILAFLISGV, IFALVFVVFDVETVFLYPWAM, and VLGVSVFIEALVFVLILIVGS.

Belongs to the complex I subunit 3 family. In terms of assembly, NDH is composed of at least 16 different subunits, 5 of which are encoded in the nucleus.

The protein resides in the plastid. It localises to the chloroplast thylakoid membrane. It catalyses the reaction a plastoquinone + NADH + (n+1) H(+)(in) = a plastoquinol + NAD(+) + n H(+)(out). The enzyme catalyses a plastoquinone + NADPH + (n+1) H(+)(in) = a plastoquinol + NADP(+) + n H(+)(out). Its function is as follows. NDH shuttles electrons from NAD(P)H:plastoquinone, via FMN and iron-sulfur (Fe-S) centers, to quinones in the photosynthetic chain and possibly in a chloroplast respiratory chain. The immediate electron acceptor for the enzyme in this species is believed to be plastoquinone. Couples the redox reaction to proton translocation, and thus conserves the redox energy in a proton gradient. The chain is NAD(P)H-quinone oxidoreductase subunit 3, chloroplastic from Pelargonium hortorum (Common geranium).